Reading from the N-terminus, the 624-residue chain is Actin-related protein 8 (624 aa).

M1 bears the N-acetylmethionine mark. Basic and acidic residues predominate over residues 1–25; that stretch reads MTQAEKGEAENGKEKGGEKEKEQRG. A disordered region spans residues 1–29; that stretch reads MTQAEKGEAENGKEKGGEKEKEQRGVKRP. 2 residues coordinate ATP: S55 and T56. Residue S132 is modified to Phosphoserine. 283–286 provides a ligand contact to ATP; that stretch reads DVGD. S412 bears the Phosphoserine mark. The tract at residues 430 to 462 is disordered; that stretch reads SKQEQSAKATADRKSASKPIGFEGDLRGQSSDL.

It belongs to the actin family. ARP8 subfamily. In terms of assembly, component of the chromatin remodeling INO80 complex; specifically part of a complex module associated with the DBINO domain of INO80. Exists as monomers and dimers, but the dimer is most probably the biologically relevant form required for stable interactions with histones that exploits the twofold symmetry of the nucleosome core.

Its subcellular location is the nucleus. The protein resides in the chromosome. Functionally, plays an important role in the functional organization of mitotic chromosomes. Exhibits low basal ATPase activity, and unable to polymerize. Its function is as follows. Proposed core component of the chromatin remodeling INO80 complex which is involved in transcriptional regulation, DNA replication and probably DNA repair. Required for the recruitment of INO80 (and probably the INO80 complex) to sites of DNA damage Strongly prefer nucleosomes and H3-H4 tetramers over H2A-H2B dimers, suggesting it may act as a nucleosome recognition module within the complex. In Bos taurus (Bovine), this protein is Actin-related protein 8 (ACTR8).